Consider the following 248-residue polypeptide: 14-3-3-like protein 2 (248 aa).

This sequence belongs to the 14-3-3 family. In terms of assembly, interacts with daf-16. Interacts with sir-2.1. Interacts with hcf-1.

The protein resides in the cytoplasm. The protein localises to the nucleus. Required for extension of lifespan by sir-2.1. Required to modulate lifespan, in concert with hcf-1, acting redundantly with 14-3-3-like protein par-5. Promotes nuclear export of yap-1. Negatively regulates the transcriptional activity of daf-16 by sequestering it to the cytoplasm. The protein is 14-3-3-like protein 2 of Caenorhabditis elegans.